Reading from the N-terminus, the 315-residue chain is Aldo-keto reductase family 4 member C11 (315 aa).

The residue at position 2 (A2) is an N-acetylalanine. NADP(+) is bound by residues 23–24 (TW) and D47. The active-site Proton donor is the Y52. NADP(+) contacts are provided by residues H114, 158–159 (SN), Q180, 207–213 (SPLGSPG), 256–258 (KST), and 262–266 (RIREN). Phosphoserine is present on S295.

This sequence belongs to the aldo/keto reductase family.

In terms of biological role, oxidoreductase that may act on a broad range of substrates such as ketosteroids, aldehydes, ketones and sugars. This is Aldo-keto reductase family 4 member C11 (AKR4C11) from Arabidopsis thaliana (Mouse-ear cress).